The primary structure comprises 271 residues: NADPH-dependent 7-cyano-7-deazaguanine reductase (271 aa).

81–83 contacts substrate; that stretch reads IES. NADPH is bound at residue 83–84; the sequence is SK. Cys-177 serves as the catalytic Thioimide intermediate. The Proton donor role is filled by Asp-184. Substrate is bound at residue 216–217; it reads HE. 245–246 contacts NADPH; sequence RG.

Belongs to the GTP cyclohydrolase I family. QueF type 2 subfamily. As to quaternary structure, homodimer.

It is found in the cytoplasm. The enzyme catalyses 7-aminomethyl-7-carbaguanine + 2 NADP(+) = 7-cyano-7-deazaguanine + 2 NADPH + 3 H(+). The protein operates within tRNA modification; tRNA-queuosine biosynthesis. Its function is as follows. Catalyzes the NADPH-dependent reduction of 7-cyano-7-deazaguanine (preQ0) to 7-aminomethyl-7-deazaguanine (preQ1). The protein is NADPH-dependent 7-cyano-7-deazaguanine reductase of Xanthomonas campestris pv. campestris (strain 8004).